A 341-amino-acid polypeptide reads, in one-letter code: tRNA-specific 2-thiouridylase MnmA (341 aa).

Residues 8–15 and Met-34 contribute to the ATP site; that span reads GMSGGVDS. The active-site Nucleophile is Cys-94. The cysteines at positions 94 and 188 are disulfide-linked. Residue Gly-118 coordinates ATP. An interaction with tRNA region spans residues 136 to 138; sequence KDQ. Cys-188 (cysteine persulfide intermediate) is an active-site residue. The tract at residues 290 to 291 is interaction with tRNA; sequence RY.

It belongs to the MnmA/TRMU family.

Its subcellular location is the cytoplasm. It carries out the reaction S-sulfanyl-L-cysteinyl-[protein] + uridine(34) in tRNA + AH2 + ATP = 2-thiouridine(34) in tRNA + L-cysteinyl-[protein] + A + AMP + diphosphate + H(+). Functionally, catalyzes the 2-thiolation of uridine at the wobble position (U34) of tRNA, leading to the formation of s(2)U34. This chain is tRNA-specific 2-thiouridylase MnmA, found in Sulfurimonas denitrificans (strain ATCC 33889 / DSM 1251) (Thiomicrospira denitrificans (strain ATCC 33889 / DSM 1251)).